Consider the following 494-residue polypeptide: tRNA-2-methylthio-N(6)-dimethylallyladenosine synthase (494 aa).

An MTTase N-terminal domain is found at 4–120 (RSYQVRTFGC…LPVLLERARH (117 aa)). 6 residues coordinate [4Fe-4S] cluster: Cys13, Cys49, Cys83, Cys157, Cys161, and Cys164. In terms of domain architecture, Radical SAM core spans 143–374 (RASHHSAWVS…SLQDEMSWAE (232 aa)). One can recognise a TRAM domain in the interval 376–449 (RAQVGRRVEI…PHHLTADGPL (74 aa)). Positions 465-494 (RAIAGDTPRPDRPAVSLGMPQLRPSAPAAR) are disordered.

This sequence belongs to the methylthiotransferase family. MiaB subfamily. In terms of assembly, monomer. It depends on [4Fe-4S] cluster as a cofactor.

It localises to the cytoplasm. It carries out the reaction N(6)-dimethylallyladenosine(37) in tRNA + (sulfur carrier)-SH + AH2 + 2 S-adenosyl-L-methionine = 2-methylsulfanyl-N(6)-dimethylallyladenosine(37) in tRNA + (sulfur carrier)-H + 5'-deoxyadenosine + L-methionine + A + S-adenosyl-L-homocysteine + 2 H(+). In terms of biological role, catalyzes the methylthiolation of N6-(dimethylallyl)adenosine (i(6)A), leading to the formation of 2-methylthio-N6-(dimethylallyl)adenosine (ms(2)i(6)A) at position 37 in tRNAs that read codons beginning with uridine. This chain is tRNA-2-methylthio-N(6)-dimethylallyladenosine synthase, found in Parafrankia sp. (strain EAN1pec).